A 193-amino-acid polypeptide reads, in one-letter code: Xanthine phosphoribosyltransferase (193 aa).

Xanthine-binding residues include leucine 20 and asparagine 27. A 5-phospho-alpha-D-ribose 1-diphosphate-binding site is contributed by 129 to 133 (ANGKA). Lysine 157 contacts xanthine.

This sequence belongs to the purine/pyrimidine phosphoribosyltransferase family. Xpt subfamily. In terms of assembly, homodimer.

It is found in the cytoplasm. It carries out the reaction XMP + diphosphate = xanthine + 5-phospho-alpha-D-ribose 1-diphosphate. Its pathway is purine metabolism; XMP biosynthesis via salvage pathway; XMP from xanthine: step 1/1. Functionally, converts the preformed base xanthine, a product of nucleic acid breakdown, to xanthosine 5'-monophosphate (XMP), so it can be reused for RNA or DNA synthesis. The polypeptide is Xanthine phosphoribosyltransferase (Bifidobacterium longum subsp. infantis (strain ATCC 15697 / DSM 20088 / JCM 1222 / NCTC 11817 / S12)).